The following is a 224-amino-acid chain: Ribonuclease HII (224 aa).

One can recognise an RNase H type-2 domain in the interval 33–224 (FHVAGVDEVG…LKERYRNDVS (192 aa)). Asp39, Glu40, and Asp131 together coordinate a divalent metal cation.

Belongs to the RNase HII family. Mn(2+) is required as a cofactor. Requires Mg(2+) as cofactor.

The protein resides in the cytoplasm. The enzyme catalyses Endonucleolytic cleavage to 5'-phosphomonoester.. Functionally, endonuclease that specifically degrades the RNA of RNA-DNA hybrids. The protein is Ribonuclease HII of Bartonella tribocorum (strain CIP 105476 / IBS 506).